The sequence spans 145 residues: Acidic phospholipase A2 homolog textilotoxin C chain (145 aa).

The N-terminal stretch at 1–19 is a signal peptide; sequence MHPAHLLVLLGVYVSLLGA. The propeptide occupies 20-27; it reads ARIPPLPL. Disulfide bonds link Cys-38–Cys-98, Cys-54–Cys-144, Cys-56–Cys-72, Cys-71–Cys-125, Cys-78–Cys-118, Cys-87–Cys-111, and Cys-105–Cys-116.

This sequence belongs to the phospholipase A2 family. Group I subfamily. D49 sub-subfamily. Heterohexamer. 2 forms exist: 2 A or 2 B chains, 2 C chains and 2 covalently-linked D chains, and 1 A or 1 B, 1 C, 2 covalently-linked D chains and 2 differentially glycosylated covalently-linked D chains. Textilotoxin was originally described as pentameric. Expressed by the venom gland.

It is found in the secreted. Its function is as follows. Snake venom oligomeric phospholipase A2 that has potent presynaptic neurotoxicity. Chain C is not itself neurotoxic, but it is essential for the neurotoxicity of textilotoxin. Chain C possesses a very low phospholipase activity. The polypeptide is Acidic phospholipase A2 homolog textilotoxin C chain (Pseudonaja textilis (Eastern brown snake)).